The primary structure comprises 423 residues: uncharacterized protein (423 aa).

The protein belongs to the asfivirus E423R family.

It localises to the virion. This is an uncharacterized protein from African swine fever virus (isolate Pig/Kenya/KEN-50/1950) (ASFV).